Reading from the N-terminus, the 252-residue chain is UPF0246 protein FP0718 (252 aa).

The protein belongs to the UPF0246 family.

This is UPF0246 protein FP0718 from Flavobacterium psychrophilum (strain ATCC 49511 / DSM 21280 / CIP 103535 / JIP02/86).